We begin with the raw amino-acid sequence, 101 residues long: ATP-dependent Clp protease adapter protein ClpS (101 aa).

The protein belongs to the ClpS family. As to quaternary structure, binds to the N-terminal domain of the chaperone ClpA.

Involved in the modulation of the specificity of the ClpAP-mediated ATP-dependent protein degradation. This is ATP-dependent Clp protease adapter protein ClpS from Clostridium acetobutylicum (strain ATCC 824 / DSM 792 / JCM 1419 / IAM 19013 / LMG 5710 / NBRC 13948 / NRRL B-527 / VKM B-1787 / 2291 / W).